A 117-amino-acid polypeptide reads, in one-letter code: UPF0342 protein LGAS_1451 (117 aa).

The protein belongs to the UPF0342 family.

The protein is UPF0342 protein LGAS_1451 of Lactobacillus gasseri (strain ATCC 33323 / DSM 20243 / BCRC 14619 / CIP 102991 / JCM 1131 / KCTC 3163 / NCIMB 11718 / NCTC 13722 / AM63).